The following is a 251-amino-acid chain: MGARASGGPLARAGLLLLLLLLLLLGLLAPGAQGARGRGGAEKNSYRRTVNTFSQSVSSLFGEDNVRAAQKFLARLTERFVLGVDMFVETLWKVWTELLDVLGLDVSNLSQYFSPASVSSSPARALLLVGVVLLAYWFLSLTLGFTFSVLHVVFGRFFWIVRVVLFSMSCVYILHKYEGEPENAVLPLCFVVAVYFMTGPMGFYWRSSPSGPSNPSNPSVEEKLEHLEKQVRLLNIRLNRVLESLDRSKDK.

The next 4 membrane-spanning stretches (helical) occupy residues 13–33, 125–145, 146–166, and 185–205; these read AGLL…PGAQ, ALLL…TLGF, TFSV…VVLF, and VLPL…GFYW. Residues 217–247 are a coiled coil; the sequence is NPSVEEKLEHLEKQVRLLNIRLNRVLESLDR. K229 bears the N6-acetyllysine mark. The residue at position 248 (S248) is a Phosphoserine.

Interacts with LETMD1. Interacts with BRI3 (isoforms 1 and 2); the interaction with isoform 2 is weaker than with isoform 1. Interacts with BRI3; the interaction is weak. Interacts with TMEM238L. In terms of tissue distribution, most abundantly expressed in brain, liver and kidney. Overexpressed in leukemia and lymphoma cell lines, as well as in various carcinomas.

The protein resides in the mitochondrion outer membrane. Involved in tumorigenesis and may function by stabilizing p53/TP53. The protein is BRI3-binding protein of Homo sapiens (Human).